We begin with the raw amino-acid sequence, 689 residues long: Protein SDA1 homolog (689 aa).

The stretch at 254-319 (KKNTKNKKKL…RFEVKLMHMD (66 aa)) forms a coiled coil. Disordered regions lie at residues 485 to 512 (EQEK…DGEW) and 606 to 689 (KPKS…RLMK). The span at 668 to 681 (SFRDKQIALRDSLL) shows a compositional bias: basic and acidic residues.

This sequence belongs to the SDA1 family.

Its subcellular location is the nucleus. The protein resides in the nucleolus. Required for 60S pre-ribosomal subunits export to the cytoplasm. The chain is Protein SDA1 homolog (sdad1) from Xenopus tropicalis (Western clawed frog).